The sequence spans 182 residues: Large ribosomal subunit protein uL5 (182 aa).

It belongs to the universal ribosomal protein uL5 family. As to quaternary structure, part of the 50S ribosomal subunit; part of the 5S rRNA/L5/L18/L25 subcomplex. Contacts the 5S rRNA and the P site tRNA. Forms a bridge to the 30S subunit in the 70S ribosome.

In terms of biological role, this is one of the proteins that bind and probably mediate the attachment of the 5S RNA into the large ribosomal subunit, where it forms part of the central protuberance. In the 70S ribosome it contacts protein S13 of the 30S subunit (bridge B1b), connecting the 2 subunits; this bridge is implicated in subunit movement. Contacts the P site tRNA; the 5S rRNA and some of its associated proteins might help stabilize positioning of ribosome-bound tRNAs. This is Large ribosomal subunit protein uL5 from Coxiella burnetii (strain CbuK_Q154) (Coxiella burnetii (strain Q154)).